Reading from the N-terminus, the 78-residue chain is Large ribosomal subunit protein bL28 (78 aa).

It belongs to the bacterial ribosomal protein bL28 family.

In Haemophilus influenzae (strain 86-028NP), this protein is Large ribosomal subunit protein bL28.